Reading from the N-terminus, the 351-residue chain is Methionine import ATP-binding protein MetN (351 aa).

An ABC transporter domain is found at 2–247 (ITTSGLTKVY…PGSELAAALF (246 aa)). 38 to 45 (GQSGAGKS) contacts ATP.

Belongs to the ABC transporter superfamily. Methionine importer (TC 3.A.1.24) family. As to quaternary structure, the complex is composed of two ATP-binding proteins (MetN), two transmembrane proteins (MetI) and a solute-binding protein (MetQ).

The protein localises to the cell membrane. It catalyses the reaction L-methionine(out) + ATP + H2O = L-methionine(in) + ADP + phosphate + H(+). The enzyme catalyses D-methionine(out) + ATP + H2O = D-methionine(in) + ADP + phosphate + H(+). Its function is as follows. Part of the ABC transporter complex MetNIQ involved in methionine import. Responsible for energy coupling to the transport system. The protein is Methionine import ATP-binding protein MetN of Streptomyces coelicolor (strain ATCC BAA-471 / A3(2) / M145).